A 338-amino-acid chain; its full sequence is Lipoate-protein ligase A (338 aa).

Residues 29 to 216 (PATQRVLFLW…AFFAHYGERV (188 aa)) enclose the BPL/LPL catalytic domain. ATP is bound by residues R71, 76-79 (GAVF), and K134. K134 serves as a coordination point for (R)-lipoate.

This sequence belongs to the LplA family. Monomer.

Its subcellular location is the cytoplasm. It carries out the reaction L-lysyl-[lipoyl-carrier protein] + (R)-lipoate + ATP = N(6)-[(R)-lipoyl]-L-lysyl-[lipoyl-carrier protein] + AMP + diphosphate + H(+). Its pathway is protein modification; protein lipoylation via exogenous pathway; protein N(6)-(lipoyl)lysine from lipoate: step 1/2. It participates in protein modification; protein lipoylation via exogenous pathway; protein N(6)-(lipoyl)lysine from lipoate: step 2/2. In terms of biological role, catalyzes both the ATP-dependent activation of exogenously supplied lipoate to lipoyl-AMP and the transfer of the activated lipoyl onto the lipoyl domains of lipoate-dependent enzymes. The protein is Lipoate-protein ligase A of Salmonella agona (strain SL483).